The primary structure comprises 33 residues: Photosystem II reaction center protein T (33 aa).

A helical membrane pass occupies residues 3–23 (ALVYTFLLVSTLGIIFFAIFF).

Belongs to the PsbT family. In terms of assembly, PSII is composed of 1 copy each of membrane proteins PsbA, PsbB, PsbC, PsbD, PsbE, PsbF, PsbH, PsbI, PsbJ, PsbK, PsbL, PsbM, PsbT, PsbY, PsbZ, Psb30/Ycf12, at least 3 peripheral proteins of the oxygen-evolving complex and a large number of cofactors. It forms dimeric complexes.

The protein resides in the plastid. The protein localises to the chloroplast thylakoid membrane. Its function is as follows. Found at the monomer-monomer interface of the photosystem II (PS II) dimer, plays a role in assembly and dimerization of PSII. PSII is a light-driven water plastoquinone oxidoreductase, using light energy to abstract electrons from H(2)O, generating a proton gradient subsequently used for ATP formation. The protein is Photosystem II reaction center protein T of Helianthus annuus (Common sunflower).